Reading from the N-terminus, the 216-residue chain is Peptide methionine sulfoxide reductase MsrA (216 aa).

Residue C58 is part of the active site.

The protein belongs to the MsrA Met sulfoxide reductase family.

The catalysed reaction is L-methionyl-[protein] + [thioredoxin]-disulfide + H2O = L-methionyl-(S)-S-oxide-[protein] + [thioredoxin]-dithiol. The enzyme catalyses [thioredoxin]-disulfide + L-methionine + H2O = L-methionine (S)-S-oxide + [thioredoxin]-dithiol. Functionally, has an important function as a repair enzyme for proteins that have been inactivated by oxidation. Catalyzes the reversible oxidation-reduction of methionine sulfoxide in proteins to methionine. This Azotobacter vinelandii (strain DJ / ATCC BAA-1303) protein is Peptide methionine sulfoxide reductase MsrA.